Reading from the N-terminus, the 1694-residue chain is Homeobox-DDT domain protein RLT2 (1694 aa).

Positions 1 to 24 are disordered; the sequence is MEGGSEKTTPEGCGGESKSKRKMK. Positions 17 to 76 form a DNA-binding region, homeobox; sequence SKSKRKMKTAAQLEVLENTYSAEPYPSEAIRADLSVKLNLSDRQLQMWFCHRRLKERKST. One can recognise a DDT domain in the interval 514–573; sequence DENVANLLMVWRFLITFADVLGLWPFTLDEFAQAFHDYDPRLMGEIHIVLLKTIIKDIEG. The HTH HARE-type domain maps to 696 to 765; sequence GTVKFAAFHV…APSTYCVRAS (70 aa). A compositionally biased stretch (acidic residues) spans 795 to 816; the sequence is EDVDDAERDEDSESDVGEDPEV. Disordered regions lie at residues 795-822, 1450-1541, 1555-1639, and 1655-1674; these read EDVDDAERDEDSESDVGEDPEVDVNLKK, KQEE…ICNE, AKTS…MNMK, and EDSYGRKQHGISISNDAATR. Phosphoserine is present on residues S806 and S808. Positions 1459-1470 are enriched in gly residues; that stretch reads GLGGVSSSGRGG. 2 stretches are compositionally biased toward basic residues: residues 1471 to 1485 and 1515 to 1531; these read RPPRGRGRPRARGNG and GGRKNGRRSGTKGRKRP. 3 stretches are compositionally biased toward acidic residues: residues 1561–1578, 1589–1605, and 1624–1635; these read DNDDDWIETPELQDDDGE, EDYDDDDVMAPIDDFDG, and DEYEEEEEEEED.

As to quaternary structure, interacts with CHR11. Interacts (via the DDT domain) with CHR11 (via C-terminus). Highly expressed in growing tissues such as inflorescence and flower meristems, young leaves and floral organs. Expressed in roots, rosette and cauline leaves, stems, flowers, inflorescences and siliques.

Its subcellular location is the nucleus. In terms of biological role, transcriptional regulator required for the maintenance of the plant vegetative phase. In association with CHR11 or CHR17 may prevent the early activation of the vegetative-to-reproductive transition by regulating key genes that contribute to flower timing, such as FT, SEP1, SEP3, AGL8/FUL, SOC1 and FLC. Involved in the transcriptional regulation of seed-specific gene expression. The protein is Homeobox-DDT domain protein RLT2 of Arabidopsis thaliana (Mouse-ear cress).